A 570-amino-acid chain; its full sequence is Proline--tRNA ligase (570 aa).

The protein belongs to the class-II aminoacyl-tRNA synthetase family. ProS type 1 subfamily. In terms of assembly, homodimer.

Its subcellular location is the cytoplasm. It carries out the reaction tRNA(Pro) + L-proline + ATP = L-prolyl-tRNA(Pro) + AMP + diphosphate. Functionally, catalyzes the attachment of proline to tRNA(Pro) in a two-step reaction: proline is first activated by ATP to form Pro-AMP and then transferred to the acceptor end of tRNA(Pro). As ProRS can inadvertently accommodate and process non-cognate amino acids such as alanine and cysteine, to avoid such errors it has two additional distinct editing activities against alanine. One activity is designated as 'pretransfer' editing and involves the tRNA(Pro)-independent hydrolysis of activated Ala-AMP. The other activity is designated 'posttransfer' editing and involves deacylation of mischarged Ala-tRNA(Pro). The misacylated Cys-tRNA(Pro) is not edited by ProRS. The chain is Proline--tRNA ligase from Wolinella succinogenes (strain ATCC 29543 / DSM 1740 / CCUG 13145 / JCM 31913 / LMG 7466 / NCTC 11488 / FDC 602W) (Vibrio succinogenes).